The chain runs to 503 residues: Mitochondrial antiviral-signaling protein (503 aa).

The Cytoplasmic segment spans residues 1–478 (MTFAEDKTYK…HCASSMPWAK (478 aa)). Residues Lys-7 and Lys-10 each participate in a glycyl lysine isopeptide (Lys-Gly) (interchain with G-Cter in ubiquitin) cross-link. The region spanning 10 to 77 (KYIRDNHSKF…WVEVFIRALQ (68 aa)) is the CARD domain. Residues 10–77 (KYIRDNHSKF…WVEVFIRALQ (68 aa)) form a required for interaction with NLRX1 region. Cys-79 is lipidated: S-palmitoyl cysteine. The interval 119 to 202 (GPSAFAPGHN…HQEQEPELGG (84 aa)) is disordered. Positions 143 to 147 (PVQDT) are interaction with TRAF2. A compositionally biased stretch (polar residues) spans 145–166 (QDTQPPESPVENSEQLLQTNSG). 5 positions are modified to phosphoserine: Ser-152, Ser-157, Ser-172, Ser-186, and Ser-220. The segment at 153–158 (PVENSE) is interaction with TRAF6 1. The segment covering 178 to 189 (PSPNQQALSPQP) has biased composition (polar residues). Arg-234 is modified (asymmetric dimethylarginine). Phosphoserine is present on residues Ser-251 and Ser-256. A Glycyl lysine isopeptide (Lys-Gly) (interchain with G-Cter in ubiquitin) cross-link involves residue Lys-302. The interval 337–503 (PSRVPASVAK…MLYRSRRLAQ (167 aa)) is interaction with DHX33. The segment at 346–398 (KAPANTIPPERNSKQAKETPEGPATKVTTGGNQTGPNSSIRSLHSGPEMSKPG) is disordered. The span at 356 to 365 (RNSKQAKETP) shows a compositional bias: basic and acidic residues. The segment covering 371-387 (KVTTGGNQTGPNSSIRS) has biased composition (polar residues). Phosphoserine is present on Ser-384. Positions 415 to 418 (LAIS) match the pLxIS motif motif. Ser-418 is subject to Phosphoserine; by TBK1. Residues 431-436 (PEENEY) form an interaction with TRAF6 2 region. Residues 446–466 (SPSADLLGSPEPLATQQPQEE) form a disordered region. A helical transmembrane segment spans residues 479-496 (WLGATSALLAVFLAVMLY). The Mitochondrial intermembrane segment spans residues 497 to 503 (RSRRLAQ).

As to quaternary structure, self-associates and polymerizes (via CARD domains) to form 400 nM long three-stranded helical filaments on mitochondria, filament nucleation requires interaction with RIGI whose CARD domains act as a template for filament assembly. Interacts with RIGI, IFIH1/MDA5, TRAF2, TRAF6 and C1QBP. May interact with FADD, RIPK1, IKBKE, CHUK and IKBKB. Interacts (when phosphorylated) with IRF3; following activation and phosphorylation on the pLxIS motif by TBK1, recruits IRF3. Interacts with NLRX1. Interaction with NLRX1 requires the CARD domain. Interacts with PSMA7. Interacts with TRAFD1. Interacts (via C-terminus) with PCBP2 in a complex containing MAVS/IPS1, PCBP2 and ITCH. Interacts with CYLD. Interacts with SRC. Interacts with DHX58/LGP2 and IKBKE. Interacts with STING1. Interacts with IFIT3 (via N-terminus). Interacts with TBK1 only in the presence of IFIT3. Interacts with TTLL12; the interaction prevents MAVS binding to TBK1 and IKBKE. Interacts with MUL1. Interacts with ANKRD17. Interacts with NDFIP1. Interacts with SMURF1; the interaction is mediated by NDFIP1 and leads to MAVS ubiquitination and degradation. Interacts (via C-terminus) with GPATCH3; the interaction is markedly increased upon viral infection. Directly interacts (via CARD domain) with ATG5 and ATG12, either as ATG5 and ATG12 monomers or as ATG12-ATG5 conjugates. Interacts with DHX33 (via the helicase C-terminal domain). Interacts with DDX3X (via C-terminus); this interaction may occur rapidly, but transiently after viral infection. The interaction with DDX3X potentiates MAVS-mediated IFNB induction. Conversely inhibition of this interaction prevents MAVS-mediated IFNB induction. Transiently interacts with TRAF3 early during viral infection. Interacts with CLPB. Interacts with TRAF3IP3. Interacts with TOMM70; the interaction is enhanced by virus infection. Interacts with ZNFX1. Interacts with DHX15. Interacts with N4BP3; this interaction promotes the polyubiquitination of MAVS. Interacts with TAX1BP1; this interaction induces MAVS polyubiquitination. Interacts with NLRP3; promoting NLRP3 recruitment to mitochondria and activation of the NLRP3 inflammasome. Interacts with ECSIT; this interaction bridges RIGI to the MAVS complex at the mitochondrion. Interacts with UBL7; this interaction promotes MAVS 'Lys-27'-linked ubiquitination leading to type I interferon production. Interacts (via transmembrane domain) with SMIM30/MAVI1 (via transmembrane domain); the interaction disrupts MAVS interaction with RIGI and inhibits MAVS aggregation, resulting in the repression of type I interferon signaling and innate immune responses. Following activation, phosphorylated by TBK1 at Ser-418 in the pLxIS motif. The phosphorylated pLxIS motif constitutes an IRF3-binding motif, leading to recruitment of the transcription factor IRF3 to induce type-I interferons and other cytokines. In terms of processing, ubiquitinated. Undergoes 'Lys-48'-linked polyubiquitination catalyzed by ITCH; ITCH-dependent polyubiquitination is mediated by the interaction with PCBP2 and leads to MAVS/IPS1 proteasomal degradation. Ubiquitinated by RNF125, leading to its degradation by the proteasome. Undergoes 'Lys-48'-linked ubiquitination catalyzed by SMURF1. Undergoes 'Lys-48'-linked ubiquitination catalyzed by MARCHF5 at Lys-7, leading to proteasomal degradation. Ubiquitinated via 'Lys-63'-linked ubiquitination at Lys-10 by TRIM31, promoting MAVS polymerization and formation of three-stranded helical filaments on mitochondria. Undergoes 'Lys-63'-linked ubiquitination leading to enhanced interaction between MAVS and TRAF2. Undergoes 'Lys-27'-linked ubiquitination by UBE2N and TRIM21 leading to enhanced interaction between MAVS and TBK1. Deubiquitinated by USP10 leading to attenuation of RIGI-mediated MAVS aggregation and production of type I interferon. Undergoes 'Lys-48'-linked polyubiquitination catalyzed by RNF115 leading to its degradation. Post-translationally, proteolytically cleaved by apoptotic caspases during apoptosis, leading to its inactivation. Cleavage by CASP3 during virus-induced apoptosis inactivates it, preventing cytokine overproduction. Palmitoylated by ZHDDC4. Palmitoylation promotes MAVS stabilization and activation by inhibiting 'Lys-48'- but facilitating 'Lys-63'-linked ubiquitination.

It is found in the mitochondrion outer membrane. It localises to the mitochondrion. Its subcellular location is the peroxisome. Its function is as follows. Adapter required for innate immune defense against viruses. Acts downstream of DHX33, RIGI and IFIH1/MDA5, which detect intracellular dsRNA produced during viral replication, to coordinate pathways leading to the activation of NF-kappa-B, IRF3 and IRF7, and to the subsequent induction of antiviral cytokines such as IFN-beta and RANTES (CCL5). Peroxisomal and mitochondrial MAVS act sequentially to create an antiviral cellular state. Upon viral infection, peroxisomal MAVS induces the rapid interferon-independent expression of defense factors that provide short-term protection, whereas mitochondrial MAVS activates an interferon-dependent signaling pathway with delayed kinetics, which amplifies and stabilizes the antiviral response. May activate the same pathways following detection of extracellular dsRNA by TLR3. May protect cells from apoptosis. Involved in NLRP3 inflammasome activation by mediating NLRP3 recruitment to mitochondria. The protein is Mitochondrial antiviral-signaling protein of Mus musculus (Mouse).